Here is a 33-residue protein sequence, read N- to C-terminus: Photosystem II reaction center protein Psb30 (33 aa).

Residues 5-25 (VILQLGSILLVVAAGPLVIVL) form a helical membrane-spanning segment.

It belongs to the Psb30/Ycf12 family. In terms of assembly, PSII is composed of 1 copy each of membrane proteins PsbA, PsbB, PsbC, PsbD, PsbE, PsbF, PsbH, PsbI, PsbJ, PsbK, PsbL, PsbM, PsbT, PsbX, PsbY, PsbZ, Psb30/Ycf12, peripheral proteins of the oxygen-evolving complex and a large number of cofactors. It forms dimeric complexes.

The protein localises to the plastid. It is found in the chloroplast thylakoid membrane. Its function is as follows. A core subunit of photosystem II (PSII), probably helps stabilize the reaction center. In Oltmannsiellopsis viridis (Marine flagellate), this protein is Photosystem II reaction center protein Psb30.